A 335-amino-acid chain; its full sequence is Lipoyl synthase (335 aa).

7 residues coordinate [4Fe-4S] cluster: Cys-55, Cys-60, Cys-66, Cys-81, Cys-85, Cys-88, and Ser-292. The Radical SAM core domain maps to 67-281 (WEDREATFLI…SQRAEEIGFQ (215 aa)).

The protein belongs to the radical SAM superfamily. Lipoyl synthase family. [4Fe-4S] cluster is required as a cofactor.

Its subcellular location is the cytoplasm. The enzyme catalyses [[Fe-S] cluster scaffold protein carrying a second [4Fe-4S](2+) cluster] + N(6)-octanoyl-L-lysyl-[protein] + 2 oxidized [2Fe-2S]-[ferredoxin] + 2 S-adenosyl-L-methionine + 4 H(+) = [[Fe-S] cluster scaffold protein] + N(6)-[(R)-dihydrolipoyl]-L-lysyl-[protein] + 4 Fe(3+) + 2 hydrogen sulfide + 2 5'-deoxyadenosine + 2 L-methionine + 2 reduced [2Fe-2S]-[ferredoxin]. Its pathway is protein modification; protein lipoylation via endogenous pathway; protein N(6)-(lipoyl)lysine from octanoyl-[acyl-carrier-protein]: step 2/2. In terms of biological role, catalyzes the radical-mediated insertion of two sulfur atoms into the C-6 and C-8 positions of the octanoyl moiety bound to the lipoyl domains of lipoate-dependent enzymes, thereby converting the octanoylated domains into lipoylated derivatives. The polypeptide is Lipoyl synthase (Micrococcus luteus (strain ATCC 4698 / DSM 20030 / JCM 1464 / CCM 169 / CCUG 5858 / IAM 1056 / NBRC 3333 / NCIMB 9278 / NCTC 2665 / VKM Ac-2230) (Micrococcus lysodeikticus)).